Consider the following 1103-residue polypeptide: Bifunctional cytochrome P450/NADPH--P450 reductase (1103 aa).

A cytochrome P450 region spans residues 1–491; the sequence is MSTPKAEPVP…SSSEHADHAA (491 aa). Residue Cys-415 participates in heme binding. Positions 492–1103 are NADPH--P450 reductase; that stretch reads GHGKAGAAKK…KERYTTDIFA (612 aa). Positions 508–649 constitute a Flavodoxin-like domain; sequence MHVYYGSNTG…DFDTWGETSF (142 aa). FMN is bound by residues 514-519, 561-564, Cys-596, and Thr-604; these read SNTGTC and SYEG. The FAD-binding FR-type domain maps to 685–924; sequence LQLQEGLVVE…RPSHTGFKPP (240 aa).

In the N-terminal section; belongs to the cytochrome P450 family. Heme serves as cofactor. FAD is required as a cofactor. The cofactor is FMN.

It catalyses the reaction 2 oxidized [cytochrome P450] + NADPH = 2 reduced [cytochrome P450] + NADP(+) + H(+). It carries out the reaction an organic molecule + reduced [NADPH--hemoprotein reductase] + O2 = an alcohol + oxidized [NADPH--hemoprotein reductase] + H2O + H(+). Its function is as follows. Functions as a fatty acid monooxygenase. Also displays a NADPH-dependent reductase activity in the C-terminal domain, which allows electron transfer from NADPH to the heme iron of the cytochrome P450 N-terminal domain. This Aspergillus oryzae (strain ATCC 42149 / RIB 40) (Yellow koji mold) protein is Bifunctional cytochrome P450/NADPH--P450 reductase.